The chain runs to 428 residues: Adenylosuccinate synthetase (428 aa).

Residues 12 to 18 (GDEGKGK) and 40 to 42 (GHT) contribute to the GTP site. Asp13 serves as the catalytic Proton acceptor. Positions 13 and 40 each coordinate Mg(2+). Residues 13 to 16 (DEGK), 38 to 41 (NAGH), Thr130, Arg144, Gln225, Thr240, and Arg304 contribute to the IMP site. The active-site Proton donor is His41. 300–306 (VTTGRAR) is a binding site for substrate. GTP contacts are provided by residues Arg306, 332–334 (KID), and 414–416 (SVG).

This sequence belongs to the adenylosuccinate synthetase family. In terms of assembly, homodimer. Mg(2+) is required as a cofactor.

It localises to the cytoplasm. It catalyses the reaction IMP + L-aspartate + GTP = N(6)-(1,2-dicarboxyethyl)-AMP + GDP + phosphate + 2 H(+). It participates in purine metabolism; AMP biosynthesis via de novo pathway; AMP from IMP: step 1/2. Its function is as follows. Plays an important role in the de novo pathway of purine nucleotide biosynthesis. Catalyzes the first committed step in the biosynthesis of AMP from IMP. In Clostridium botulinum (strain Okra / Type B1), this protein is Adenylosuccinate synthetase.